The chain runs to 588 residues: Adenine deaminase (588 aa).

This sequence belongs to the metallo-dependent hydrolases superfamily. Adenine deaminase family. As to quaternary structure, homodimer. Mn(2+) serves as cofactor.

The catalysed reaction is adenine + H2O + H(+) = hypoxanthine + NH4(+). The sequence is that of Adenine deaminase from Escherichia coli O17:K52:H18 (strain UMN026 / ExPEC).